A 217-amino-acid polypeptide reads, in one-letter code: Cytochrome b5 domain-containing protein 1 (217 aa).

Positions 6 to 72 (PRFYTPREVS…NPKTGDVKTH (67 aa)) constitute a Cytochrome b5 heme-binding domain. Residues His-41 and His-72 each contribute to the heme site.

Belongs to the cytochrome b5 family.

It localises to the cytoplasm. Its subcellular location is the cytoskeleton. The protein resides in the cilium axoneme. In terms of biological role, radial spoke stalk protein that binds heme under oxidizing conditions. Required for the coordinated beating of multiple cilia maybe by functioning in a redox signaling pathway. The polypeptide is Cytochrome b5 domain-containing protein 1 (cyb5d1) (Xenopus tropicalis (Western clawed frog)).